A 529-amino-acid polypeptide reads, in one-letter code: Aldehyde dehydrogenase 1 (529 aa).

251 to 256 contributes to the NAD(+) binding site; sequence GSTYVG. Residues E273 and C307 contribute to the active site.

This sequence belongs to the aldehyde dehydrogenase family.

It carries out the reaction an aldehyde + NAD(+) + H2O = a carboxylate + NADH + 2 H(+). This is Aldehyde dehydrogenase 1 from Entamoeba histolytica (strain ATCC 30459 / HM-1:IMSS / ABRM).